A 472-amino-acid polypeptide reads, in one-letter code: MNTFPKLNTIRNELKSVLDSDVIPLELTSLNRNRSIAKNPFLFEVTLNNTGQKNNGIEAFDPVTNQLPINLGSINSLNTGQILLEWTGLDINVTGTISSINDNEIIITFTSAFNNQYNYYRGLISVFSTGTWAHIIEYVFLGNNLGLFRFENLPSTLPTIGSSVTITFNGLLTSSGSNIFSVFIPKTMEHNALSGLLLYNETLNENKMISTYSSQRAEALISSGPVPTWTNAHTYSVRKEVPFVSSVSAAPPPTSTTVSLTPIPVGTGSPGDFIRNRSTGEIVTIVTIDNTTGAVTFSPSVNPVWVAGQTLEILTFNRDNFNYVTYSSLQREAPTGEYEATLISLNLPKERLDIDFPIEKMPFVYLEVRDTFNPSTNSFMSNNPGSKKALFKATLKSNKTDDKPFVKFSGDRAIRTLKFRPSAANFIFSILGPNGNPLMLWRQDTSSPYPPNRLLQTEAFLNIRKVSNSKYA.

It belongs to the IIV-6 198R family.

This is an uncharacterized protein from Acheta domesticus (House cricket).